We begin with the raw amino-acid sequence, 225 residues long: Esterase OVCA2 (225 aa).

Active-site charge relay system residues include Ser-119, Asp-177, and His-204.

It belongs to the LovG family. In terms of tissue distribution, strongly expressed in kidney and liver. Moderately expressed in brain, skin and testis. Weakly expressed in heart, lung, small intestine, spleen, stomach and thymus.

The catalysed reaction is a carboxylic ester + H2O = an alcohol + a carboxylate + H(+). Its function is as follows. Exhibits ester hydrolase activity with a strong preference for long-chain alkyl ester substrates and high selectivity against a variety of short, branched, and substituted esters. Is able to hydrolyze ester bonds within a wide range of p-nitrophenyl derivatives (C2-C14) in vitro, with a strong preference toward substrates of &gt;8 carbons. The protein is Esterase OVCA2 (Ovca2) of Mus musculus (Mouse).